Here is a 411-residue protein sequence, read N- to C-terminus: uncharacterized protein (411 aa).

This is an uncharacterized protein from Mycoplasma genitalium (strain ATCC 33530 / DSM 19775 / NCTC 10195 / G37) (Mycoplasmoides genitalium).